A 261-amino-acid polypeptide reads, in one-letter code: Small ribosomal subunit protein uS2 (261 aa).

S2 is modified (N-acetylserine). Positions 215 to 261 are disordered; the sequence is AEEAKTTEDVEEAAPVDADEWTGETEEVDWAESGATPAVEDAAASNW. A compositionally biased stretch (acidic residues) spans 223–244; that stretch reads DVEEAAPVDADEWTGETEEVDW.

This sequence belongs to the universal ribosomal protein uS2 family. In terms of assembly, component of the small ribosomal subunit. Mature ribosomes consist of a small (40S) and a large (60S) subunit. The 40S subunit contains about 33 different proteins and 1 molecule of RNA (18S). The 60S subunit contains about 49 different proteins and 3 molecules of RNA (25S, 5.8S and 5S). Interacts with RPS21.

It localises to the cytoplasm. Required for the assembly and/or stability of the 40S ribosomal subunit. Required for the processing of the 20S rRNA-precursor to mature 18S rRNA in a late step of the maturation of 40S ribosomal subunits. This chain is Small ribosomal subunit protein uS2, found in Scheffersomyces stipitis (strain ATCC 58785 / CBS 6054 / NBRC 10063 / NRRL Y-11545) (Yeast).